A 384-amino-acid polypeptide reads, in one-letter code: Chorismate synthase (384 aa).

Residues Arg-40 and Arg-46 each coordinate NADP(+). FMN-binding positions include 127 to 129 (RTS), 247 to 248 (QA), Ala-292, 307 to 311 (KPIPT), and Arg-333.

The protein belongs to the chorismate synthase family. As to quaternary structure, homotetramer. It depends on FMNH2 as a cofactor.

The enzyme catalyses 5-O-(1-carboxyvinyl)-3-phosphoshikimate = chorismate + phosphate. It functions in the pathway metabolic intermediate biosynthesis; chorismate biosynthesis; chorismate from D-erythrose 4-phosphate and phosphoenolpyruvate: step 7/7. Catalyzes the anti-1,4-elimination of the C-3 phosphate and the C-6 proR hydrogen from 5-enolpyruvylshikimate-3-phosphate (EPSP) to yield chorismate, which is the branch point compound that serves as the starting substrate for the three terminal pathways of aromatic amino acid biosynthesis. This reaction introduces a second double bond into the aromatic ring system. This is Chorismate synthase from Alkaliphilus oremlandii (strain OhILAs) (Clostridium oremlandii (strain OhILAs)).